The following is a 455-amino-acid chain: Chromosomal replication initiator protein DnaA (455 aa).

A domain I, interacts with DnaA modulators region spans residues 1-74 (MSEQEIWEKV…LYEAIGHEIA (74 aa)). Residues 74 to 116 (APVFYTEEELKSLHTSEQKEENQPEQPAKKYTPGVDEAVIGGE) form a domain II region. Over residues 85–95 (SLHTSEQKEEN) the composition is skewed to basic and acidic residues. Residues 85 to 104 (SLHTSEQKEENQPEQPAKKY) are disordered. The domain III, AAA+ region stretch occupies residues 117 to 333 (QFNTHNTFET…GALTRVLAFS (217 aa)). ATP-binding residues include Gly-161, Gly-163, Lys-164, and Thr-165. The interval 334–455 (KLQGQPITTE…ENLEKEIRNQ (122 aa)) is domain IV, binds dsDNA.

This sequence belongs to the DnaA family. Oligomerizes as a right-handed, spiral filament on DNA at oriC.

It is found in the cytoplasm. Functionally, plays an essential role in the initiation and regulation of chromosomal replication. ATP-DnaA binds to the origin of replication (oriC) to initiate formation of the DNA replication initiation complex once per cell cycle. Binds the DnaA box (a 9 base pair repeat at the origin) and separates the double-stranded (ds)DNA. Forms a right-handed helical filament on oriC DNA; dsDNA binds to the exterior of the filament while single-stranded (ss)DNA is stabiized in the filament's interior. The ATP-DnaA-oriC complex binds and stabilizes one strand of the AT-rich DNA unwinding element (DUE), permitting loading of DNA polymerase. After initiation quickly degrades to an ADP-DnaA complex that is not apt for DNA replication. Binds acidic phospholipids. The polypeptide is Chromosomal replication initiator protein DnaA (Staphylococcus saprophyticus subsp. saprophyticus (strain ATCC 15305 / DSM 20229 / NCIMB 8711 / NCTC 7292 / S-41)).